The following is a 396-amino-acid chain: Na(+)/H(+) antiporter NhaA 2 (396 aa).

11 helical membrane passes run Leu-17–Phe-37, Leu-62–Ile-82, Ser-98–Leu-118, Gly-125–Gly-145, Leu-154–Phe-174, Leu-179–Tyr-199, Ile-209–Ala-229, Phe-268–Phe-288, Leu-296–Phe-316, Ile-337–Leu-357, and Val-368–Ile-388.

The protein belongs to the NhaA Na(+)/H(+) (TC 2.A.33) antiporter family.

It localises to the cell inner membrane. The enzyme catalyses Na(+)(in) + 2 H(+)(out) = Na(+)(out) + 2 H(+)(in). Its function is as follows. Na(+)/H(+) antiporter that extrudes sodium in exchange for external protons. The sequence is that of Na(+)/H(+) antiporter NhaA 2 from Aliarcobacter butzleri (strain RM4018) (Arcobacter butzleri).